The following is a 598-amino-acid chain: UvrABC system protein C (598 aa).

Positions 14–91 (DSPGCYLHKD…IQKNMPKYNI (78 aa)) constitute a GIY-YIG domain. The UVR domain occupies 196 to 231 (DKIIEDLRSKMLAASEEMAFERAAEYRDLISGIATM).

This sequence belongs to the UvrC family. As to quaternary structure, interacts with UvrB in an incision complex.

It is found in the cytoplasm. The UvrABC repair system catalyzes the recognition and processing of DNA lesions. UvrC both incises the 5' and 3' sides of the lesion. The N-terminal half is responsible for the 3' incision and the C-terminal half is responsible for the 5' incision. The sequence is that of UvrABC system protein C from Streptococcus pyogenes serotype M3 (strain ATCC BAA-595 / MGAS315).